A 318-amino-acid polypeptide reads, in one-letter code: Fe(3+) dicitrate transport system permease protein FecD (318 aa).

The Cytoplasmic segment spans residues 1–2 (MK). Residues 3–23 (IALVIFITLALAGCALLSLHM) form a helical membrane-spanning segment. At 24-55 (GVIPVPWRALLTDWQAGHEHYYVLMEYRLPRL) the chain is on the periplasmic side. Residues 56–76 (LLALFVGAALAVAGVLIQGIV) form a helical membrane-spanning segment. The Cytoplasmic segment spans residues 77-105 (RNPLASPDILGVNHAASLASVGALLLMPS). The chain crosses the membrane as a helical span at residues 106–126 (LPVMVLPLLAFAGGMAGLILL). At 127–137 (KMLAKTHQPMK) the chain is on the periplasmic side. Residues 138-158 (LALTGVALSACWASLTDYLML) traverse the membrane as a helical segment. Over 159-179 (SRPQDVNNALLWLTGSLWGRD) the chain is Cytoplasmic. A helical transmembrane segment spans residues 180 to 200 (WSFVKIAIPLMILFLPLSLSF). Residues 201 to 225 (CRDLDLLALGDARATTLGVSVPHTR) are Periplasmic-facing. Residues 226-246 (FWALLLAVAMTSTGVAACGPI) traverse the membrane as a helical segment. Residues 247 to 269 (SFIGLVVPHMMRSITGGRHRRLL) are Cytoplasmic-facing. Residues 270–290 (PVSALTGALLLVVADLLARII) form a helical membrane-spanning segment. Residues 291–294 (HPPL) are Periplasmic-facing. Residues 295–315 (ELPVGVLTAIIGAPWFVWLLV) traverse the membrane as a helical segment. Residues 316 to 318 (RMR) are Cytoplasmic-facing.

It belongs to the binding-protein-dependent transport system permease family. FecCD subfamily. As to quaternary structure, the complex is composed of two ATP-binding proteins (FecE), two transmembrane proteins (FecC and FecD) and a solute-binding protein (FecB). Interacts with FecB.

The protein localises to the cell inner membrane. In terms of biological role, part of the ABC transporter complex FecBCDE involved in citrate-dependent Fe(3+) uptake. Probably responsible for the translocation of the substrate across the membrane. This chain is Fe(3+) dicitrate transport system permease protein FecD, found in Escherichia coli (strain K12).